The following is a 118-amino-acid chain: Holo-[acyl-carrier-protein] synthase (118 aa).

Residues D8 and E58 each contribute to the Mg(2+) site.

Belongs to the P-Pant transferase superfamily. AcpS family. Mg(2+) serves as cofactor.

It is found in the cytoplasm. It carries out the reaction apo-[ACP] + CoA = holo-[ACP] + adenosine 3',5'-bisphosphate + H(+). Its function is as follows. Transfers the 4'-phosphopantetheine moiety from coenzyme A to a Ser of acyl-carrier-protein. The protein is Holo-[acyl-carrier-protein] synthase of Streptococcus pyogenes serotype M1.